A 190-amino-acid chain; its full sequence is Guanylate kinase (190 aa).

In terms of domain architecture, Guanylate kinase-like spans 8 to 186; sequence ARPTVLTGPS…ALAELEKQMN (179 aa). 15 to 22 provides a ligand contact to ATP; sequence GPSGVGKG.

The protein belongs to the guanylate kinase family.

It localises to the cytoplasm. The enzyme catalyses GMP + ATP = GDP + ADP. It carries out the reaction dZMP + ATP = dZDP + ADP. It participates in purine metabolism. Functionally, essential for recycling GMP and indirectly, cGMP. Its function is as follows. (Microbial infection) Catalyzes the phosphorylation of dZMP to dZDP, when the bacterium is infected by a phage that produces the substrate for the synthesis of dZTP (2- amino-2'-deoxyadenosine 5'-triphosphate), which is then used by the phage as a DNA polymerase substrate. The polypeptide is Guanylate kinase (Synechococcus sp. (strain CC9311)).